A 187-amino-acid chain; its full sequence is Transmembrane protein 272 (187 aa).

4 helical membrane passes run 21 to 41, 52 to 72, 107 to 127, and 149 to 169; these read CFVV…FIGM, LIPL…SLLL, IHLL…YWVF, and LYLF…LLLL.

The protein resides in the membrane. This Homo sapiens (Human) protein is Transmembrane protein 272.